A 95-amino-acid chain; its full sequence is Defensin-1 (95 aa).

The first 19 residues, 1-19, serve as a signal peptide directing secretion; the sequence is MKIYFIVGLLFMAMVAIMA. Residues 20 to 43 constitute a propeptide that is removed on maturation; the sequence is APVEDEFEPLEHFENEERADRHRR. 3 disulfides stabilise this stretch: C46–C74, C60–C79, and C64–C81. F94 is subject to Phenylalanine amide.

The protein localises to the secreted. Functionally, found in royal jelly and in hemolymph, potent antibacterial protein against Gram-positive bacteria at low concentration. The sequence is that of Defensin-1 from Apis mellifera carnica (Carniolan honeybee).